A 604-amino-acid chain; its full sequence is Sulfite reductase [NADPH] flavoprotein alpha-component (604 aa).

Residues Val66–Ala204 enclose the Flavodoxin-like domain. FMN is bound by residues Ser72 to Ala77, Ser119 to Gly122, and Leu155 to Cys164. Positions Ala239–Pro453 constitute an FAD-binding FR-type domain. FAD is bound by residues Thr327, Gln361, Arg391–Ser394, Thr409–Gly411, and Gly424–Ser427. NADP(+) is bound by residues Ser524–Arg525, Lys530–Gln534, and Asp566. Tyr604 is an FAD binding site.

It belongs to the NADPH-dependent sulphite reductase flavoprotein subunit CysJ family. The protein in the N-terminal section; belongs to the flavodoxin family. This sequence in the C-terminal section; belongs to the flavoprotein pyridine nucleotide cytochrome reductase family. As to quaternary structure, alpha(8)-beta(8). The alpha component is a flavoprotein, the beta component is a hemoprotein. Requires FAD as cofactor. It depends on FMN as a cofactor.

The catalysed reaction is hydrogen sulfide + 3 NADP(+) + 3 H2O = sulfite + 3 NADPH + 4 H(+). Its pathway is sulfur metabolism; hydrogen sulfide biosynthesis; hydrogen sulfide from sulfite (NADPH route): step 1/1. Component of the sulfite reductase complex that catalyzes the 6-electron reduction of sulfite to sulfide. This is one of several activities required for the biosynthesis of L-cysteine from sulfate. The flavoprotein component catalyzes the electron flow from NADPH -&gt; FAD -&gt; FMN to the hemoprotein component. The sequence is that of Sulfite reductase [NADPH] flavoprotein alpha-component from Neisseria meningitidis serogroup B (strain ATCC BAA-335 / MC58).